The sequence spans 506 residues: Maturase K (506 aa).

It belongs to the intron maturase 2 family. MatK subfamily.

The protein resides in the plastid. It is found in the chloroplast. Functionally, usually encoded in the trnK tRNA gene intron. Probably assists in splicing its own and other chloroplast group II introns. The sequence is that of Maturase K from Austrosteenisia blackii (Blood vine).